A 245-amino-acid chain; its full sequence is Phycocyanobilin:ferredoxin oxidoreductase (245 aa).

It belongs to the HY2 family.

It catalyses the reaction (2R,3Z)-phycocyanobilin + 4 oxidized [2Fe-2S]-[ferredoxin] = biliverdin IXalpha + 4 reduced [2Fe-2S]-[ferredoxin] + 4 H(+). Functionally, catalyzes the four-electron reduction of biliverdin IX-alpha (2-electron reduction at both the A and D rings); the reaction proceeds via an isolatable 2-electron intermediate, 181,182-dihydrobiliverdin. This Nostoc punctiforme (strain ATCC 29133 / PCC 73102) protein is Phycocyanobilin:ferredoxin oxidoreductase (pcyA).